The following is a 341-amino-acid chain: Tryptophan--tRNA ligase (341 aa).

Residues 11–13 and 19–20 contribute to the ATP site; these read RPT and GH. The short motif at 12–20 is the 'HIGH' region element; it reads PTGKLHIGH. Aspartate 140 provides a ligand contact to L-tryptophan. Residues 152–154, leucine 193, and 201–205 contribute to the ATP site; these read GED and KMSKS. A 'KMSKS' region motif is present at residues 201–205; sequence KMSKS.

It belongs to the class-I aminoacyl-tRNA synthetase family. As to quaternary structure, homodimer.

The protein resides in the cytoplasm. It carries out the reaction tRNA(Trp) + L-tryptophan + ATP = L-tryptophyl-tRNA(Trp) + AMP + diphosphate + H(+). In terms of biological role, catalyzes the attachment of tryptophan to tRNA(Trp). The polypeptide is Tryptophan--tRNA ligase (Clostridium longisporum).